The primary structure comprises 105 residues: AAFALPALASSFEKDVISFRAIQAVLEKRGLSKLEDDPVLSALAHTKTIISNPVIEEALLNGANLKAGNGIPCAESCVWIPCTVTALIGCGCSNKVCYNSLQTKY.

A signal peptide spans A1 to A9. Residues S10–N69 constitute a propeptide that is removed on maturation. Positions G70–N99 form a cross-link, cyclopeptide (Gly-Asn). 3 disulfide bridges follow: C73–C90, C77–C92, and C82–C97. Positions S100–Y105 are excised as a propeptide.

In terms of processing, this is a cyclic peptide.

Functionally, probably participates in a plant defense mechanism. Has cytotoxic activity, active against a human lymphoma cell line with an IC(50) of 3.2 uM. This chain is Cyclotide vibi-E, found in Viola biflora (Yellow wood violet).